The following is a 246-amino-acid chain: MyoD family inhibitor domain-containing protein (246 aa).

A disordered region spans residues 1 to 71 (MSGAGEALAP…WGNPSDGELI (71 aa)). Over residues 33 to 43 (KCDKDNTEKDI) the composition is skewed to basic and acidic residues. Residues 44-63 (TQATNSHFTHGEMQDQSIWG) are compositionally biased toward polar residues. The 173-residue stretch at 74 to 246 (QPQRLPQLQT…MECCGICFPS (173 aa)) folds into the MDFI domain. Residues serine 128, serine 140, and serine 143 each carry the phosphoserine modification.

This sequence belongs to the MDFI family. As to quaternary structure, interacts with HAND1; the interaction sequesters HAND1 into the nucleolus and inhibits its activity. Interacts (via C-terminus) with ZIC2. Interacts (via C-terminus) with AXIN1, the histidine-rich region of CCNT1/cyclin-T and weakly with LEF1. Interacts with CCNT2. Interacts with GATA2. Interacts (via C-terminus) with Piezo channel composed of PIEZO1 or PIEZO2; the interaction prolongs Piezo channel inactivation. In terms of assembly, (Microbial infection) Interacts (via C-terminus) with HIV-1 Tat and Rev. In terms of processing, palmitoylated. Expressed in lymphatic tissues. Detected in the spleen, thymus, peripheral blood leukocytes as well as prostate, uterus and small intestine. Expressed in lymphatic endothelial cells.

It localises to the nucleus. It is found in the nucleolus. The protein resides in the cytoplasm. Its subcellular location is the secreted. Its function is as follows. Required to control the activity of various transcription factors through their sequestration in the cytoplasm. Retains nuclear Zic proteins ZIC1, ZIC2 and ZIC3 in the cytoplasm and inhibits their transcriptional activation. Modulates the expression from cellular promoters. Binds to the axin complex, resulting in an increase in the level of free beta-catenin. Affects axin regulation of the WNT and JNK signaling pathways. Involved in the development of lymphatic vessel valves. Required to promote lymphatic endothelial cell migration, in a process that involves down-regulation of integrin beta 1 activation and control of cell adhesion to the extracellular matrix. Regulates the activity of mechanosensitive Piezo channel. (Microbial infection) Modulates the expression from viral promoters. Down-regulates Tat-dependent transcription of the human immunodeficiency virus type 1 (HIV-1) LTR by interacting with HIV-1 Tat and Rev and impairing their nuclear import, probably by rendering the NLS domains inaccessible to importin-beta. Also stimulates activation of human T-cell leukemia virus type I (HTLV-I) LTR. This Homo sapiens (Human) protein is MyoD family inhibitor domain-containing protein.